Reading from the N-terminus, the 494-residue chain is Hydroxyneurosporene desaturase (494 aa).

It belongs to the carotenoid/retinoid oxidoreductase family.

It carries out the reaction rhodopin + A = (3E)-3,4-didehydrorhodopin + AH2. It functions in the pathway carotenoid biosynthesis; spheroidene biosynthesis. Functionally, catalyzes the introduction of C-3,4 double bonds into 1-hydroxyneurosporene (1-HO-Neu) to yield demethylspheroidene (DMS). The protein is Hydroxyneurosporene desaturase (crtD) of Rhodobacter capsulatus (strain ATCC BAA-309 / NBRC 16581 / SB1003).